The chain runs to 194 residues: Holliday junction branch migration complex subunit RuvA (194 aa).

Residues 1–64 form a domain I region; it reads MISRLTGKLV…EDAHLLFGFA (64 aa). The segment at 65-143 is domain II; it reads TAEERKTFRQ…AHTVTDGLFA (79 aa). The segment at 144-147 is flexible linker; it reads AAPA. Positions 147–194 are domain III; it reads AADETEDIVSTLLALGYSEREAKAAVKGVPEGTDVGEGVRLALKNLLK.

It belongs to the RuvA family. As to quaternary structure, homotetramer. Forms an RuvA(8)-RuvB(12)-Holliday junction (HJ) complex. HJ DNA is sandwiched between 2 RuvA tetramers; dsDNA enters through RuvA and exits via RuvB. An RuvB hexamer assembles on each DNA strand where it exits the tetramer. Each RuvB hexamer is contacted by two RuvA subunits (via domain III) on 2 adjacent RuvB subunits; this complex drives branch migration. In the full resolvosome a probable DNA-RuvA(4)-RuvB(12)-RuvC(2) complex forms which resolves the HJ.

Its subcellular location is the cytoplasm. Its function is as follows. The RuvA-RuvB-RuvC complex processes Holliday junction (HJ) DNA during genetic recombination and DNA repair, while the RuvA-RuvB complex plays an important role in the rescue of blocked DNA replication forks via replication fork reversal (RFR). RuvA specifically binds to HJ cruciform DNA, conferring on it an open structure. The RuvB hexamer acts as an ATP-dependent pump, pulling dsDNA into and through the RuvAB complex. HJ branch migration allows RuvC to scan DNA until it finds its consensus sequence, where it cleaves and resolves the cruciform DNA. The sequence is that of Holliday junction branch migration complex subunit RuvA from Neisseria meningitidis serogroup B (strain ATCC BAA-335 / MC58).